The primary structure comprises 284 residues: RNase adapter protein RapZ (284 aa).

8-15 is an ATP binding site; that stretch reads GRSGSGKS. 56–59 lines the GTP pocket; the sequence is DVRN. The interval 266-284 is RNA-binding; the sequence is RSRGKNVQSRHRTLEKRKT.

It belongs to the RapZ-like family. RapZ subfamily. In terms of assembly, homotrimer.

In terms of biological role, modulates the synthesis of GlmS, by affecting the processing and stability of the regulatory small RNA GlmZ. When glucosamine-6-phosphate (GlcN6P) concentrations are high in the cell, RapZ binds GlmZ and targets it to cleavage by RNase E. Consequently, GlmZ is inactivated and unable to activate GlmS synthesis. Under low GlcN6P concentrations, RapZ is sequestered and inactivated by an other regulatory small RNA, GlmY, preventing GlmZ degradation and leading to synthesis of GlmS. The polypeptide is RNase adapter protein RapZ (Citrobacter koseri (strain ATCC BAA-895 / CDC 4225-83 / SGSC4696)).